We begin with the raw amino-acid sequence, 353 residues long: Protein disulfide isomerase CRELD2 (353 aa).

The N-terminal stretch at 1-24 (MRLPRRAALGLLPLLLLLPPAPEA) is a signal peptide. The CXXC motif lies at 31–34 (CHRC). Disulfide bonds link Cys-31–Cys-34, Cys-140–Cys-154, Cys-148–Cys-166, and Cys-168–Cys-177. Residues 136–178 (DCLACQGGSQRPCSGNGHCSGDGSRQGDGSCRCHMGYQGPLCT) enclose the EGF-like 1 domain. The FU 1 repeat unit spans residues 193–240 (HSICTACDESCKTCSGLTNRDCGECEVGWVLDEGACVDVDECAAEPPP). Asn-251 carries an N-linked (GlcNAc...) asparagine glycan. Residues 253–302 (SYTCEECDSSCVGCTGEGPGNCKECISGYAREHGQCADVDECSLAEKTCV) form an FU 2 repeat. The CXXC signature appears at 263–266 (CVGC). Disulfide bonds link Cys-263–Cys-266, Cys-294–Cys-308, Cys-301–Cys-317, and Cys-319–Cys-330. The EGF-like 2; calcium-binding domain occupies 290–331 (DVDECSLAEKTCVRKNENCYNTPGSYVCVCPDGFEETEDACV). Residues 332–353 (PPAEAEATEGESPTQLPSREDL) form a disordered region. Over residues 342-353 (ESPTQLPSREDL) the composition is skewed to polar residues.

This sequence belongs to the CRELD family. Interacts with CHRNA4. Component of a complex containing at least CRELD2, MANF, MATN3 and PDIA4. Ubiquitously expressed. Highly expressed in skeletal muscle, heart, liver, kidney and placenta.

The protein localises to the endoplasmic reticulum. The catalysed reaction is Catalyzes the rearrangement of -S-S- bonds in proteins.. Its function is as follows. Protein disulfide isomerase. Might play a role in the unfolded protein response. May regulate transport of alpha4-beta2 neuronal acetylcholine receptor. This is Protein disulfide isomerase CRELD2 (CRELD2) from Homo sapiens (Human).